Here is a 123-residue protein sequence, read N- to C-terminus: Small ribosomal subunit protein uS13c (123 aa).

Residues 90 to 123 (GKRHRNSLPVRGQRTRTNARSRRGAKKTVTGKKK) form a disordered region. Residues 102–123 (QRTRTNARSRRGAKKTVTGKKK) show a composition bias toward basic residues.

Belongs to the universal ribosomal protein uS13 family. As to quaternary structure, part of the 30S ribosomal subunit.

Its subcellular location is the plastid. The protein resides in the chloroplast. Functionally, located at the top of the head of the 30S subunit, it contacts several helices of the 16S rRNA. The sequence is that of Small ribosomal subunit protein uS13c from Thalassiosira pseudonana (Marine diatom).